The following is a 675-amino-acid chain: Serine/threonine-protein kinase ATG1 (675 aa).

The Protein kinase domain occupies 25–328; sequence FVIGGEIGKG…FEDFFNDPVV (304 aa). Residues 31–39 and Lys54 contribute to the ATP site; that span reads IGKGSFAQV. The active-site Proton acceptor is the Asp168. Residues 339–374 are compositionally biased toward basic and acidic residues; it reads DIPKVEQKPSRDLRSLEADPQREQSELAKSPRERPL. Disordered regions lie at residues 339-455 and 501-577; these read DIPK…ERKL and RLTS…TTRS. 3 stretches are compositionally biased toward polar residues: residues 390–399, 516–538, and 556–565; these read ANVSARTGQS, ATQQ…SAVQ, and ASRSLNTSSA.

The protein belongs to the protein kinase superfamily. Ser/Thr protein kinase family. APG1/unc-51/ULK1 subfamily. As to quaternary structure, homodimer. Forms a ternary complex with ATG13 and ATG17.

It localises to the cytoplasm. The protein resides in the preautophagosomal structure membrane. It carries out the reaction L-seryl-[protein] + ATP = O-phospho-L-seryl-[protein] + ADP + H(+). It catalyses the reaction L-threonyl-[protein] + ATP = O-phospho-L-threonyl-[protein] + ADP + H(+). Functionally, serine/threonine protein kinase involved in the cytoplasm to vacuole transport (Cvt) and found to be essential in autophagy, where it is required for the formation of autophagosomes. Involved in the clearance of protein aggregates which cannot be efficiently cleared by the proteasome. Required for selective autophagic degradation of the nucleus (nucleophagy) as well as for mitophagy which contributes to regulate mitochondrial quantity and quality by eliminating the mitochondria to a basal level to fulfill cellular energy requirements and preventing excess ROS production. Also involved in endoplasmic reticulum-specific autophagic process, in selective removal of ER-associated degradation (ERAD) substrates. Plays a key role in ATG9 and ATG23 cycling through the pre-autophagosomal structure and is necessary to promote ATG18 binding to ATG9 through phosphorylation of ATG9. Catalyzes phosphorylation of ATG4, decreasing the interaction between ATG4 and ATG8 and impairing deconjugation of PE-conjugated forms of ATG8. The chain is Serine/threonine-protein kinase ATG1 from Colletotrichum lindemuthianum (Bean anthracnose fungus).